Reading from the N-terminus, the 805-residue chain is N-(5-amino-5-carboxypentanoyl)-L-cysteinyl-D-valine synthase (805 aa).

The interval 783–805 is disordered; sequence PDTGGGAVGSTTTGGVRGELREI.

Belongs to the ATP-dependent AMP-binding enzyme family. Requires pantetheine 4'-phosphate as cofactor.

It carries out the reaction L-2-aminoadipate + L-valine + L-cysteine + 3 ATP + H2O = N-[(5S)-5-amino-5-carboxypentanoyl]-L-cysteinyl-D-valine + 3 AMP + 3 diphosphate + 3 H(+). The protein operates within antibiotic biosynthesis; penicillin G biosynthesis; penicillin G from L-alpha-aminoadipate and L-cysteine and L-valine: step 1/3. Functionally, each of the constituent amino acids of ACV are activated as aminoacyl-adenylates with peptide bonds formed through the participation of amino acid thioester intermediates. This Streptomyces clavuligerus protein is N-(5-amino-5-carboxypentanoyl)-L-cysteinyl-D-valine synthase (pcbAB).